Reading from the N-terminus, the 63-residue chain is Small ribosomal subunit protein uS14 (63 aa).

C26, C29, C42, and C45 together coordinate Zn(2+).

This sequence belongs to the universal ribosomal protein uS14 family. Zinc-binding uS14 subfamily. Part of the 30S ribosomal subunit. Contacts proteins S3 and S10. The cofactor is Zn(2+).

Functionally, binds 16S rRNA, required for the assembly of 30S particles and may also be responsible for determining the conformation of the 16S rRNA at the A site. In Gloeobacter violaceus (strain ATCC 29082 / PCC 7421), this protein is Small ribosomal subunit protein uS14.